The sequence spans 376 residues: NAD-capped RNA hydrolase (376 aa).

Cys-182, Cys-185, Cys-200, and Cys-211 together coordinate Zn(2+). Substrate contacts are provided by residues Tyr-222, 258–260 (AGF), Glu-274, Glu-278, and Glu-321. The Nudix hydrolase domain occupies 223–351 (PRTDPCVIMV…KDGPAPILFP (129 aa)). Residues Ala-258, Glu-274, Glu-278, and Glu-321 each coordinate Mg(2+). The Nudix box signature appears at 259–280 (GFLEPGESLEEAVVRETYEESG). The Microbody targeting signal signature appears at 374-376 (VKM).

It belongs to the Nudix hydrolase family. NudC subfamily. In terms of assembly, homodimer. Mg(2+) is required as a cofactor. Zn(2+) serves as cofactor.

The catalysed reaction is a 5'-end NAD(+)-phospho-ribonucleoside in mRNA + H2O = a 5'-end phospho-adenosine-phospho-ribonucleoside in mRNA + beta-nicotinamide D-ribonucleotide + 2 H(+). The enzyme catalyses NAD(+) + H2O = beta-nicotinamide D-ribonucleotide + AMP + 2 H(+). It carries out the reaction NADH + H2O = reduced beta-nicotinamide D-ribonucleotide + AMP + 2 H(+). Its function is as follows. mRNA decapping enzyme that specifically removes the nicotinamide adenine dinucleotide (NAD) cap from a subset of mRNAs by hydrolyzing the diphosphate linkage to produce nicotinamide mononucleotide (NMN) and 5' monophosphate mRNA. The NAD-cap is present at the 5'-end of some RNAs; in contrast to the canonical N7 methylguanosine (m7G) cap, the NAD cap promotes mRNA decay. Mediates the hydrolysis of some nucleoside diphosphate derivatives. The chain is NAD-capped RNA hydrolase from Schizosaccharomyces pombe (strain 972 / ATCC 24843) (Fission yeast).